The primary structure comprises 285 residues: Probable endonuclease 4 (285 aa).

Zn(2+) contacts are provided by His68, His108, Glu145, Asp179, His182, His216, Asp229, His231, and Glu261.

This sequence belongs to the AP endonuclease 2 family. It depends on Zn(2+) as a cofactor.

It carries out the reaction Endonucleolytic cleavage to 5'-phosphooligonucleotide end-products.. Its function is as follows. Endonuclease IV plays a role in DNA repair. It cleaves phosphodiester bonds at apurinic or apyrimidinic (AP) sites, generating a 3'-hydroxyl group and a 5'-terminal sugar phosphate. The polypeptide is Probable endonuclease 4 (Geotalea daltonii (strain DSM 22248 / JCM 15807 / FRC-32) (Geobacter daltonii)).